We begin with the raw amino-acid sequence, 507 residues long: MGCWGRNRGRLLCMLLLTFMFMVLEVVVSRVTASLAMLSDSFHMLSDVLALVVALVAERFARRTHATQKNTFGWIRAEVMGALVNAIFLTGLCFAILLEAVERFIEPHEMQQPLVVLSVGVAGLLVNVLGLCLFHHHSGEGQGAGHGHSHGHGHGHLAKGARKAGRAGGEAGAPPGRAPDQEPDQEETNTLVANTSNSNGLKADQAEPEKLRSDDPVDVQVNGNLIQESDSLESEDNRAGQLNMRGVFLHVLGDALGSVIVVVNALVFYFSWKGCTEDDFCVNPCFPDPCKSSVELMNSTQAPMHEAGPCWVLYLDPTLCIIMVCILLYTTYPLLKESALILLQTVPKQIDIKHLVKELRDVEGVEEVHELHVWQLAGSRIIATAHIKCEDPASYMQVAKTIKDVFHNHGIHATTIQPEFASVGSKSSVVPCELACRTQCALKQCCGTRPQVHSGKEAEKAPTVSISCLELSENLEKKPRRTKAEGSVPAVVIEIKNVPNKQPESSL.

At 1-10 (MGCWGRNRGR) the chain is on the cytoplasmic side. The chain crosses the membrane as a helical span at residues 11–31 (LLCMLLLTFMFMVLEVVVSRV). The Extracellular segment spans residues 32–35 (TASL). A helical membrane pass occupies residues 36-56 (AMLSDSFHMLSDVLALVVALV). 2 residues coordinate Zn(2+): H43 and D47. The Cytoplasmic portion of the chain corresponds to 57–78 (AERFARRTHATQKNTFGWIRAE). A helical transmembrane segment spans residues 79 to 99 (VMGALVNAIFLTGLCFAILLE). Over 100–113 (AVERFIEPHEMQQP) the chain is Extracellular. Residues 114-134 (LVVLSVGVAGLLVNVLGLCLF) traverse the membrane as a helical segment. Residues 135 to 247 (HHHSGEGQGA…RAGQLNMRGV (113 aa)) lie on the Cytoplasmic side of the membrane. The disordered stretch occupies residues 140-218 (EGQGAGHGHS…EKLRSDDPVD (79 aa)). The 6 X 2 AA approximate repeats of H-G stretch occupies residues 145–156 (GHGHSHGHGHGH). A compositionally biased stretch (basic residues) spans 147 to 165 (GHSHGHGHGHLAKGARKAG). The segment covering 188–200 (TNTLVANTSNSNG) has biased composition (polar residues). Basic and acidic residues predominate over residues 204 to 215 (DQAEPEKLRSDD). Residues 248 to 268 (FLHVLGDALGSVIVVVNALVF) form a helical membrane-spanning segment. Residues H250 and D254 each coordinate Zn(2+). The Extracellular segment spans residues 269–307 (YFSWKGCTEDDFCVNPCFPDPCKSSVELMNSTQAPMHEA). The N-linked (GlcNAc...) asparagine glycan is linked to N298. Residues 308–328 (GPCWVLYLDPTLCIIMVCILL) traverse the membrane as a helical segment. Residues 329–507 (YTTYPLLKES…VPNKQPESSL (179 aa)) lie on the Cytoplasmic side of the membrane. Position 506 is a phosphoserine (S506).

The protein belongs to the cation diffusion facilitator (CDF) transporter (TC 2.A.4) family. SLC30A subfamily. In terms of assembly, homodimer. Interacts with TMEM163. Interacts and forms a complex with TMC6 and TMC8; the interaction regulates zinc transport into the ER. In terms of tissue distribution, widely expressed. Detected in duodenum and jejunum but not in ileum and colon (at protein level). Expressed by neuroglial cells (at protein level).

Its subcellular location is the cell membrane. It localises to the basolateral cell membrane. The protein localises to the cytoplasmic vesicle membrane. It is found in the cytoplasm. The protein resides in the endoplasmic reticulum membrane. Its subcellular location is the golgi apparatus membrane. It localises to the nucleus membrane. It carries out the reaction Zn(2+)(in) + 2 H(+)(out) = Zn(2+)(out) + 2 H(+)(in). Its activity is regulated as follows. Calcium-dependent. Functionally, zinc ion:proton antiporter that could function at the plasma membrane mediating zinc efflux from cells against its electrochemical gradient protecting them from intracellular zinc accumulation and toxicity. Alternatively, could prevent the transport to the plasma membrane of CACNB2, the L-type calcium channels regulatory subunit, through a yet to be defined mechanism. By modulating the expression of these channels at the plasma membrane, could prevent calcium and zinc influx into cells. By the same mechanism, could also prevent L-type calcium channels-mediated heavy metal influx into cells. In some cells, could also function as a zinc ion:proton antiporter mediating zinc entry into the lumen of cytoplasmic vesicles. In macrophages, can increase zinc ions concentration into the lumen of cytoplasmic vesicles containing engulfed bacteria and could help inactivate them. Forms a complex with TMC6/EVER1 and TMC8/EVER2 at the ER membrane of keratynocytes which facilitates zinc uptake into the ER. Down-regulates the activity of transcription factors induced by zinc and cytokines. The chain is Proton-coupled zinc antiporter SLC30A1 from Rattus norvegicus (Rat).